Here is a 375-residue protein sequence, read N- to C-terminus: V-type proton ATPase subunit C (375 aa).

It belongs to the V-ATPase C subunit family. In terms of assembly, V-ATPase is a heteromultimeric enzyme composed of a peripheral catalytic V1 complex (components A to H) attached to an integral membrane V0 proton pore complex (components: a, c, c'', d and e). In terms of processing, phosphorylated on Ser/Thr residues by WNK8.

It is found in the vacuole membrane. Functionally, subunit of the peripheral V1 complex of vacuolar ATPase. Subunit C is necessary for the assembly of the catalytic sector of the enzyme and is likely to have a specific function in its catalytic activity. V-ATPase is responsible for acidifying a variety of intracellular compartments in eukaryotic cells. In Arabidopsis thaliana (Mouse-ear cress), this protein is V-type proton ATPase subunit C (VHA-C).